A 2382-amino-acid polypeptide reads, in one-letter code: Serine/threonine-protein kinase WNK1 (2382 aa).

2 disordered regions span residues methionine 1–arginine 81 and leucine 95–aspartate 203. Serine 15 and serine 19 each carry phosphoserine. The span at arginine 50–arginine 66 shows a compositional bias: basic and acidic residues. Position 60 is a phosphothreonine (threonine 60). 2 stretches are compositionally biased toward low complexity: residues leucine 95–proline 108 and valine 125–proline 153. Residues serine 167 and serine 174 each carry the phosphoserine modification. One can recognise a Protein kinase domain in the interval leucine 221–phenylalanine 479. Serine 231 contributes to the ATP binding site. Chloride-binding residues include phenylalanine 283 and leucine 299. Residues threonine 301 to methionine 304 and lysine 351 each bind ATP. Residue aspartate 368 is the Proton acceptor of the active site. Positions 369 and 371 each coordinate chloride. Phosphoserine; by autocatalysis is present on residues serine 378 and serine 382. The tract at residues glutamate 488–alanine 555 is autoinhibitory domain. Residues glutamine 573 to serine 588 are compositionally biased toward basic and acidic residues. Disordered stretches follow at residues glutamine 573–alanine 779, glutamine 1018–glycine 1041, and valine 1053–lysine 1119. Residues alanine 598 to proline 614 show a composition bias toward polar residues. Residues threonine 615 to threonine 625 show a composition bias toward low complexity. An interaction with KLHL3 region spans residues glutamate 628–glutamine 638. Polar residues predominate over residues histidine 637 to threonine 689. The segment covering proline 709–alanine 779 has biased composition (low complexity). Positions glutamine 1025–glycine 1041 are enriched in polar residues. Residues valine 1053 to serine 1077 are compositionally biased toward low complexity. The span at serine 1080 to serine 1090 shows a compositional bias: polar residues. Over residues threonine 1098–lysine 1119 the composition is skewed to basic residues. The RFXV motif 1 signature appears at arginine 1257–valine 1260. Serine 1261 carries the phosphoserine modification. Low complexity-rich tracts occupy residues serine 1457–proline 1467 and glutamine 1733–valine 1745. Disordered stretches follow at residues serine 1457 to serine 1476 and glutamine 1733 to glutamine 1790. Phosphothreonine is present on threonine 1848. Positions arginine 1859–valine 1862 match the RFXV motif 2 motif. A disordered region spans residues alanine 1866–valine 1948. Positions alanine 1869–histidine 1884 are enriched in basic and acidic residues. Low complexity predominate over residues serine 1887–valine 1905. The segment covering lysine 1927–proline 1940 has biased composition (polar residues). Short sequence motifs (RFXV motif) lie at residues arginine 1945 to valine 1948 and arginine 1957 to valine 1960. Phosphoserine is present on residues serine 1978, serine 2002, serine 2011, serine 2012, serine 2027, serine 2029, and serine 2032. The span at proline 1994–glutamate 2003 shows a compositional bias: basic and acidic residues. 2 disordered regions span residues proline 1994–aspartate 2069 and leucine 2101–serine 2196. A compositionally biased stretch (low complexity) spans glutamine 2035–aspartate 2062. Phosphoserine is present on serine 2121. The span at glycine 2122–lysine 2134 shows a compositional bias: basic residues. Residues serine 2135–serine 2145 show a composition bias toward low complexity. 2 stretches are compositionally biased toward polar residues: residues proline 2146–leucine 2167 and glutamate 2175–serine 2196. The tract at residues serine 2241–alanine 2261 is amphipathic alpha-helix. Phosphoserine occurs at positions 2270 and 2286. Residues proline 2332–glutamine 2352 are disordered. Residues serine 2370 and serine 2372 each carry the phosphoserine modification.

The protein belongs to the protein kinase superfamily. Ser/Thr protein kinase family. WNK subfamily. As to quaternary structure, interacts with WNK3. Interacts with WNK4; inhibiting the activity of WNK4. Interacts with SGK1; promoting its activation. Associates with the mTORC2 complex. Interacts with UVRAG. Interacts (via amphipathic alpha-helix region) with EMC2; promoting the ER membrane protein complex assembly. In terms of assembly, interacts with isoform 1; inhibiting isoform 1 activity. Mg(2+) is required as a cofactor. In terms of processing, autophosphorylated at Ser-378 and Ser-382, promoting its activity. Autophosphorylation at Ser-382 is inhibited by intracellular calcium. Phosphorylation at Thr-60 increases ability to activate SGK1. Ubiquitinated by the BCR(KLHL3) complex, leading to its degradation. Also ubiquitinated by the BCR(KLHL2) complex. Post-translationally, may be O-glycosylated. As to expression, widely expressed, with highest levels observed in the testis, heart, kidney and skeletal muscle. Strong expression in dorsal root ganglia and spinal cord. In terms of tissue distribution, this isoform is kidney-specific and specifically expressed in the distal convoluted tubule (DCT) and connecting tubule (CNT) of the nephron.

The protein localises to the cytoplasm. Its subcellular location is the nucleus. The protein resides in the cytoskeleton. It localises to the spindle. The catalysed reaction is L-seryl-[protein] + ATP = O-phospho-L-seryl-[protein] + ADP + H(+). It carries out the reaction L-threonyl-[protein] + ATP = O-phospho-L-threonyl-[protein] + ADP + H(+). Activated in response to hyperosmotic stress: cell shrinkage promotes formation of a membraneless compartment that concentrates WNK1 with its substrates, OXSR1/OSR1 and STK39/SPAK. Activation requires autophosphorylation of Ser-382 and, to a lower extent, Ser-378. Autophosphorylation and subsequent activation is inhibited by increases in intracellular ionic strength: Cl(-) potently inhibits WNK1 kinase activity via direct binding. Also inhibited by K(+) ions. Inhibited by small compounds staurosporine, tyrphostin 47, as well as Src tyrosine kinase inhibitors PP1 and PP2. Functionally, serine/threonine-protein kinase component of the WNK1-SPAK/OSR1 kinase cascade, which acts as a key regulator of blood pressure and regulatory volume increase by promoting ion influx. WNK1 mediates regulatory volume increase in response to hyperosmotic stress by acting as a molecular crowding sensor, which senses cell shrinkage and mediates formation of a membraneless compartment by undergoing liquid-liquid phase separation. The membraneless compartment concentrates WNK1 with its substrates, OXSR1/OSR1 and STK39/SPAK, promoting WNK1-dependent phosphorylation and activation of downstream kinases OXSR1/OSR1 and STK39/SPAK. Following activation, OXSR1/OSR1 and STK39/SPAK catalyze phosphorylation of ion cotransporters SLC12A1/NKCC2, SLC12A2/NKCC1, SLC12A5/KCC2 and SLC12A6/KCC3, regulating their activity. Phosphorylation of Na-K-Cl cotransporters SLC12A2/NKCC1 and SLC12A2/NKCC1 promote their activation and ion influx; simultaneously, phosphorylation of K-Cl cotransporters SLC12A5/KCC2 and SLC12A6/KCC3 inhibit their activity, blocking ion efflux. Also acts as a regulator of angiogenesis in endothelial cells via activation of OXSR1/OSR1 and STK39/SPAK: activation of OXSR1/OSR1 regulates chemotaxis and invasion, while STK39/SPAK regulates endothelial cell proliferation. Also acts independently of the WNK1-SPAK/OSR1 kinase cascade by catalyzing phosphorylation of other substrates, such as SYT2, PCF11 and NEDD4L. Mediates phosphorylation of SYT2, regulating SYT2 association with phospholipids and membrane-binding. Regulates mRNA export in the nucleus by mediating phosphorylation of PCF11, thereby decreasing the association between PCF11 and POLR2A/RNA polymerase II and promoting mRNA export to the cytoplasm. Acts as a negative regulator of autophagy. Required for the abscission step during mitosis, independently of the WNK1-SPAK/OSR1 kinase cascade. May also play a role in actin cytoskeletal reorganization. Also acts as a scaffold protein independently of its protein kinase activity: negatively regulates cell membrane localization of various transporters and channels, such as SLC4A4, SLC26A6, SLC26A9, TRPV4 and CFTR. Involved in the regulation of epithelial Na(+) channel (ENaC) by promoting activation of SGK1 in a kinase-independent manner: probably acts as a scaffold protein that promotes the recruitment of SGK1 to the mTORC2 complex in response to chloride, leading to mTORC2-dependent phosphorylation and activation of SGK1. Acts as an assembly factor for the ER membrane protein complex independently of its protein kinase activity: associates with EMC2 in the cytoplasm via its amphipathic alpha-helix, and prevents EMC2 ubiquitination and subsequent degradation, thereby promoting EMC2 stabilization. Kinase-defective isoform specifically expressed in kidney, which acts as a dominant-negative regulator of the longer isoform 1. Does not directly inhibit WNK4 and has no direct effect on sodium and chloride ion transport. Down-regulates sodium-chloride cotransporter activity indirectly by inhibiting isoform 1, it associates with isoform 1 and attenuates its kinase activity. In kidney, may play an important role regulating sodium and potassium balance. This Homo sapiens (Human) protein is Serine/threonine-protein kinase WNK1.